Consider the following 157-residue polypeptide: SsrA-binding protein (157 aa).

A disordered region spans residues 133–157 (LHDKRESEKKRDWGREKGRLLRARG). The span at 135–151 (DKRESEKKRDWGREKGR) shows a compositional bias: basic and acidic residues.

This sequence belongs to the SmpB family.

The protein localises to the cytoplasm. Its function is as follows. Required for rescue of stalled ribosomes mediated by trans-translation. Binds to transfer-messenger RNA (tmRNA), required for stable association of tmRNA with ribosomes. tmRNA and SmpB together mimic tRNA shape, replacing the anticodon stem-loop with SmpB. tmRNA is encoded by the ssrA gene; the 2 termini fold to resemble tRNA(Ala) and it encodes a 'tag peptide', a short internal open reading frame. During trans-translation Ala-aminoacylated tmRNA acts like a tRNA, entering the A-site of stalled ribosomes, displacing the stalled mRNA. The ribosome then switches to translate the ORF on the tmRNA; the nascent peptide is terminated with the 'tag peptide' encoded by the tmRNA and targeted for degradation. The ribosome is freed to recommence translation, which seems to be the essential function of trans-translation. This Nitrobacter winogradskyi (strain ATCC 25391 / DSM 10237 / CIP 104748 / NCIMB 11846 / Nb-255) protein is SsrA-binding protein.